The sequence spans 963 residues: Probable sucrose-phosphate synthase 2 (963 aa).

The disordered stretch occupies residues 111-150; the sequence is KLRTDTNADMSEDLFEGEKGEDAGDPSVAYGDSTTGSSPK.

This sequence belongs to the glycosyltransferase 1 family. Homodimer or homotetramer. Expressed in germinating seeds.

The catalysed reaction is beta-D-fructose 6-phosphate + UDP-alpha-D-glucose = sucrose 6(F)-phosphate + UDP + H(+). Its pathway is glycan biosynthesis; sucrose biosynthesis; sucrose from D-fructose 6-phosphate and UDP-alpha-D-glucose: step 1/2. Its activity is regulated as follows. Activity is regulated by phosphorylation and moderated by concentration of metabolites and light. In terms of biological role, plays a role in photosynthetic sucrose synthesis by catalyzing the rate-limiting step of sucrose biosynthesis from UDP-glucose and fructose- 6-phosphate. Involved in the regulation of carbon partitioning in the leaves of plants. May regulate the synthesis of sucrose and therefore play a major role as a limiting factor in the export of photoassimilates out of the leaf. Plays a role for sucrose availability that is essential for plant growth and fiber elongation. The chain is Probable sucrose-phosphate synthase 2 (SPS2) from Oryza sativa subsp. japonica (Rice).